The sequence spans 92 residues: Large ribosomal subunit protein bL27 (92 aa).

Residues 1-21 (MSKKKGVGSSRNGRDSESKRL) are disordered. Basic and acidic residues predominate over residues 12–21 (NGRDSESKRL).

Belongs to the bacterial ribosomal protein bL27 family.

This Halothermothrix orenii (strain H 168 / OCM 544 / DSM 9562) protein is Large ribosomal subunit protein bL27.